We begin with the raw amino-acid sequence, 103 residues long: UPF0473 protein SSA_2239 (103 aa).

This sequence belongs to the UPF0473 family.

The chain is UPF0473 protein SSA_2239 from Streptococcus sanguinis (strain SK36).